We begin with the raw amino-acid sequence, 809 residues long: AP-3 complex subunit beta (809 aa).

5 HEAT repeats span residues 37-76, 112-151, 153-186, 187-224, and 524-561; these read YYSQNINPQQLVTLLNSRNSREVRDAMKRIISIMASDDDS, DPNLTLLSINSLQKSLSDSNSELRCFALSALSDMKMSSLA, IILHTVKKLVTDPSAMVRGEVALAIIKLYRAGKN, DYHEELLDILKELMADTDPKVISCAVLAYKECYADHLE, and KICPDVLRRLIQNFSNEGPETRCQILVLSAKLLSYDID. Serine 693, serine 698, serine 724, and serine 726 each carry phosphoserine. Disordered regions lie at residues 708-739 and 763-809; these read FTSSSNAKLTGINDGDSNSISGKGNVNTFTSQ and PRKI…HLEL. Residues 722–739 show a composition bias toward polar residues; it reads GDSNSISGKGNVNTFTSQ. Residues 772–791 are compositionally biased toward acidic residues; the sequence is ESSDEDEDESEESSDDDEYS. Over residues 792-809 the composition is skewed to low complexity; it reads DSSLGTSSSGTSSSHLEL.

The protein belongs to the adaptor complexes large subunit family. As to quaternary structure, adaptor protein complex 3 (AP-3) is a heterotetramer composed of 2 large adaptins (APL5 and APL6), a medium adaptin (APM3) and a small adaptin (APS3). Pyrophosphorylated by 5-diphosphoinositol pentakisphosphate (5-IP7). Serine pyrophosphorylation is achieved by Mg(2+)-dependent, but enzyme independent transfer of a beta-phosphate from a inositol pyrophosphate to a pre-phosphorylated serine residue.

It is found in the golgi apparatus. The protein resides in the cytoplasmic vesicle. Its subcellular location is the clathrin-coated vesicle membrane. In terms of biological role, part of the AP-3 complex, an adaptor-related complex which is not clathrin-associated. The complex is associated with the Golgi region as well as more peripheral structures. It facilitates the budding of vesicles from the Golgi membrane and may be directly involved in trafficking to the vacuole. Required for the transport via the ALP pathway, which directs the transport of the cargo proteins PHO8 and VAM3 to the vacuole. The protein is AP-3 complex subunit beta (APL6) of Saccharomyces cerevisiae (strain ATCC 204508 / S288c) (Baker's yeast).